Reading from the N-terminus, the 331-residue chain is Zinc finger protein 660 (331 aa).

A compositionally biased stretch (basic residues) spans 1 to 12; the sequence is MRRKTRNFKHKT. The disordered stretch occupies residues 1-35; that stretch reads MRRKTRNFKHKTVKDNKVLTEGSDQESEKDNSQCC. Ser23 carries the phosphoserine modification. C2H2-type zinc fingers lie at residues 50 to 72, 78 to 100, 106 to 128, 134 to 156, 162 to 184, 190 to 212, 218 to 240, 246 to 268, 274 to 296, and 302 to 324; these read YVCTECGKAFSQSANLTVHERIH, YKCKECGKAFSHSSNLVVHRRIH, YTCSECGKSFSGKSHLIRHQGIH, YECKECGKAFSRSSGLISHHRVH, YSCIECGKAFSRSSNLTQHQRMH, YKCKECGKTCGSNTKIMDHQRIH, YECDECGKTFILRKTLNEHQRLH, YKCNECGKAFTSNRNLVDHQRVH, YKCNECGKTFRQTSQVILHLRTH, and YKCSECGKAYRYSSQLIQHQRKH.

It belongs to the krueppel C2H2-type zinc-finger protein family.

Its subcellular location is the nucleus. Functionally, may be involved in transcriptional regulation. The chain is Zinc finger protein 660 (ZNF660) from Homo sapiens (Human).